Consider the following 2742-residue polypeptide: Polycystin-1-like protein 1 (2742 aa).

The Extracellular segment spans residues 1–1602; it reads MFCLWIFSLA…LDQFLSVSRD (1602 aa). 5 N-linked (GlcNAc...) asparagine glycosylation sites follow: N35, N133, N149, N220, and N267. PKD domains follow at residues 286-372 and 370-454; these read AVRI…VKLN and KLNR…PCQP. N-linked (GlcNAc...) asparagine glycans are attached at residues N383, N397, N486, N545, N693, N709, and N735. An REJ domain is found at 452–1338; the sequence is CQPPPVKNLG…ITFFLPASLI (887 aa). Disordered regions lie at residues 767–829 and 846–908; these read SPSR…QSDP and DLRG…RPSV. The span at 779–799 shows a compositional bias: polar residues; it reads SELTDSPVSSVTVGFSGSESF. Over residues 880 to 893 the composition is skewed to low complexity; it reads SFPSDSDSFSHSSS. Residues N1080, N1101, N1201, N1318, N1437, N1490, and N1568 are each glycosylated (N-linked (GlcNAc...) asparagine). The GAIN-B domain maps to 1436 to 1587; sequence HNFSITQEHL…KVLQQQIQSS (152 aa). 2 disulfide bridges follow: C1541-C1569 and C1556-C1571. The segment at 1541–1587 is GPS; sequence CLSWEDQQGSWTQNGCRAQTNDKTSAVNCSCHHLKPLKVLQQQIQSS. The helical transmembrane segment at 1603–1623 threads the bilayer; sequence LTVVFVLLLCVSLNIPVLVWC. Topologically, residues 1624–1812 are cytoplasmic; that stretch reads KKTDATSEEN…SPHLFTRAQR (189 aa). The PLAT domain maps to 1648–1769; it reads HFYAVTVHTG…GDGQVERMLR (122 aa). Residues 1813–1833 form a helical membrane-spanning segment; that stretch reads LCVCLLLFLGYACVNIIITHQ. The Extracellular portion of the chain corresponds to 1834-1851; sequence RDDQLPFDLGVIDVTSVS. Residues 1852 to 1872 form a helical membrane-spanning segment; it reads IATGLVSVVAVLPVAMVISFL. At 1873–2005 the chain is on the cytoplasmic side; the sequence is FRVKSGRMTL…YRLASLLYHC (133 aa). The chain crosses the membrane as a helical span at residues 2006–2026; that stretch reads VAWTLCLLFCLSCLILSAVLG. The Extracellular segment spans residues 2027–2040; sequence TRLNSGKILHWIHS. The helical transmembrane segment at 2041–2061 threads the bilayer; sequence LFVSLTFCFFVIHPATILVLA. The Cytoplasmic portion of the chain corresponds to 2062-2151; sequence AVVSWRFKRS…KQAVIHKMLR (90 aa). Residues 2152–2172 form a helical membrane-spanning segment; it reads DLCLCGSMFFLMVCITYGSPV. Residues 2173 to 2344 lie on the Extracellular side of the membrane; sequence DEHYPLNAAF…QSVRLYHSPS (172 aa). N2218 carries an N-linked (GlcNAc...) asparagine glycan. The helical transmembrane segment at 2345-2365 threads the bilayer; it reads MLDYTVMVWQLLFLLLSLVNL. At 2366-2378 the chain is on the cytoplasmic side; sequence YHQTSTAAQHGLM. The chain crosses the membrane as a helical span at residues 2379–2401; the sequence is GYWKTTSISVEVSLVIVSLVYYV. The Extracellular segment spans residues 2402-2442; it reads HYVYHPTMVMEVAEQLRRNHREHVDVSTLANSEQFSRTLRG. A helical membrane pass occupies residues 2443 to 2463; it reads IILFLLAVKCVTVVRLNRILA. At 2464-2467 the chain is on the cytoplasmic side; the sequence is PSMP. A helical membrane pass occupies residues 2468–2488; it reads LLSLSSLLWPAISGLLLLSIF. Topologically, residues 2489 to 2528 are extracellular; it reads SCMGRLLYIERTFHSIQTVLWHFWSLRKSRDLISLWRDFY. The helical transmembrane segment at 2529–2549 threads the bilayer; the sequence is YFGLLYASSAMLTTMVFAVMI. Topologically, residues 2550 to 2742 are cytoplasmic; that stretch reads RKAKRSPSTK…LVHHEQGTKN (193 aa).

This sequence belongs to the polycystin family. In terms of assembly, heterodimer. Interacts with pkd2 to form a calcium channel. Interacts with pkd2l1 to form ciliary calcium channel. As to expression, expressed in Kupffer's vesicle, an organ equivalent to the node.

The protein resides in the cell projection. The protein localises to the cilium membrane. Its function is as follows. Component of a calcium-permeant ion channel formed by PKD1L2 and PKD1L1 in primary cilia, where it controls cilium calcium concentration, without affecting cytoplasmic calcium concentration, and regulates sonic hedgehog/SHH signaling and GLI2 transcription. The PKD1L1:PKD2L1 channel complex is mechanosensitive only at high pressures and is highly temperature sensitive. Also involved in left/right axis specification downstream of nodal flow by forming a complex with PKD2 in cilia to facilitate flow detection in left/right patterning. This chain is Polycystin-1-like protein 1, found in Oryzias latipes (Japanese rice fish).